Here is a 1204-residue protein sequence, read N- to C-terminus: DNA-directed RNA polymerase subunit beta' (1204 aa).

Residues cysteine 60, cysteine 62, cysteine 75, and cysteine 78 each coordinate Zn(2+). Aspartate 449, aspartate 451, and aspartate 453 together coordinate Mg(2+). Residues cysteine 819, cysteine 893, cysteine 900, and cysteine 903 each contribute to the Zn(2+) site.

It belongs to the RNA polymerase beta' chain family. The RNAP catalytic core consists of 2 alpha, 1 beta, 1 beta' and 1 omega subunit. When a sigma factor is associated with the core the holoenzyme is formed, which can initiate transcription. The cofactor is Mg(2+). Zn(2+) serves as cofactor.

It carries out the reaction RNA(n) + a ribonucleoside 5'-triphosphate = RNA(n+1) + diphosphate. Functionally, DNA-dependent RNA polymerase catalyzes the transcription of DNA into RNA using the four ribonucleoside triphosphates as substrates. In Bacillus cytotoxicus (strain DSM 22905 / CIP 110041 / 391-98 / NVH 391-98), this protein is DNA-directed RNA polymerase subunit beta'.